The following is an 805-amino-acid chain: Arginine/serine-rich protein PNISR (805 aa).

Over residues 74–88 (PNNHGNFQGDSNFNR) the composition is skewed to polar residues. Disordered regions lie at residues 74 to 331 (PNNH…EEKE) and 382 to 805 (LTGL…SRSR). Pro residues-rich tracts occupy residues 100–115 (PPHPPPDQPWMPPTPG) and 183–195 (YWQPGPPGPPAPP). Residues 197–210 (NRRERPSSFRDRQR) are compositionally biased toward basic and acidic residues. S204 and S211 each carry phosphoserine. K218 participates in a covalent cross-link: Glycyl lysine isopeptide (Lys-Gly) (interchain with G-Cter in SUMO2). Positions 237 to 276 (REGLEKMEREKQKKLEKERMEQQRSQLSKKEKKATEDAEG) form a coiled coil. Basic and acidic residues predominate over residues 238 to 258 (EGLEKMEREKQKKLEKERMEQ). Residues S290, S304, S313, and S321 each carry the phosphoserine modification. The span at 290-299 (SDEEEEDTEN) shows a compositional bias: acidic residues. A compositionally biased stretch (gly residues) spans 384–393 (GLGGLGGYGS). Basic and acidic residues predominate over residues 421 to 463 (QKQEAFWRKEKEQQLLHDKQMEEEKQQTERVTKEMNEFIHKEQ). Positions 429 to 461 (KEKEQQLLHDKQMEEEKQQTERVTKEMNEFIHK) form a coiled coil. S465 and S467 each carry phosphoserine. Basic and acidic residues-rich tracts occupy residues 470-486 (EAREADGDVVNEKKRTP) and 494-506 (EPKKEHKEKEKQG). Position 485 is a phosphothreonine (T485). Residue K496 forms a Glycyl lysine isopeptide (Lys-Gly) (interchain with G-Cter in SUMO2) linkage. Positions 508 to 550 (SRSGSSSSGSSSSNSRTSSTSSTVSSSSYSSSSGSSRTSSRSS) are enriched in low complexity. Composition is skewed to basic residues over residues 551–579 (SPKRKKRHSRSRSPTIKARRSRSRSYSRR), 587–598 (ARVKIRDRRRSN), and 607–639 (RRNRSPSRERRRSRSRSRDRRTNRASRSRSRDR). Basic and acidic residues predominate over residues 659–721 (EAKEQERKKE…KRKRESERTF (63 aa)). Residues 673–703 (IDKDRKKKDKEREREQDKRKEKQKREEKDFK) adopt a coiled-coil conformation. A Glycyl lysine isopeptide (Lys-Gly) (interchain with G-Cter in SUMO2) cross-link involves residue K703. S726 is subject to Phosphoserine. A compositionally biased stretch (basic and acidic residues) spans 732–753 (IRHDSRQDSKKSTTKDSKKHSG). Positions 754 to 767 (SDSSGRSSSESPGS) are enriched in low complexity. Basic residues-rich tracts occupy residues 771–781 (KKAKKPKHSRS) and 789–805 (RSGKKASRKHKSKSRSR).

The protein belongs to the splicing factor SR family. In terms of assembly, interacts with PNN. Expressed in heart, skeletal muscle, thymus, spleen, kidney, liver, placenta and leukocytes.

It is found in the nucleus speckle. The chain is Arginine/serine-rich protein PNISR (PNISR) from Homo sapiens (Human).